We begin with the raw amino-acid sequence, 818 residues long: ATM interactor (818 aa).

A compositionally biased stretch (low complexity) spans 1–34 (MAATEAAAADSAGPAPGVPATPASTRGAAAASSP). The disordered stretch occupies residues 1-62 (MAATEAAAAD…RAAAPVPPAR (62 aa)). Residues 80–105 (ILCTVRGCGKILPNSPALNMHLVKSH) form a C2H2-type 1 zinc finger. The C2H2-type 2; degenerate zinc finger occupies 161–181 (HKCSKCSNSYGTEWDLKRHEE). Residues 210–221 (HEIPAEHRDPPS) are compositionally biased toward basic and acidic residues. Disordered regions lie at residues 210-284 (HEIP…ATPP) and 603-625 (DNRS…GSAQ). The required for formation of RAD51 foci stretch occupies residues 219-437 (PPSKKRKMES…PDSSVSSCSQ (219 aa)). Composition is skewed to polar residues over residues 229 to 243 (YLQN…TEPL) and 603 to 612 (DNRSLLSDTN).

In terms of assembly, interacts via its C-terminus with ATM. Interacts with DYNLL; this interaction inhibits ATMIN transcriptional activity and hence may play a role in a feedback loop whereby DYNLL1 inhibits transactivation of its own promoter by ATMIN. ATMIN.

It is found in the nucleus. Transcription factor. Plays a crucial role in cell survival and RAD51 foci formation in response to methylating DNA damage. Involved in regulating the activity of ATM in the absence of DNA damage. May play a role in stabilizing ATM. Binds to the DYNLL1 promoter and activates its transcription. The sequence is that of ATM interactor from Mus musculus (Mouse).